We begin with the raw amino-acid sequence, 381 residues long: MERGMHLGAAAAGEDDLFLHKSLSASTSKRLEAAFRSTPPGMDLSLAPPPRERPASSSSSPLGCFEPADPEGAGLLLPPPGGGGGGSAGSGGGGGGGVGVPGLLVGSAGVGGDPSLSSLPAGAALCLKYGESASRGSVAESSGGEQSPDDDSDGRCELVLRAGVADPRASPGAGGGGAKAAEGCSNAHLHGGASVPPGGLGGGGGGGSSSGSSGGGGGSGSGSGGSSSSSSSSSKKSKEQKALRLNINARERRRMHDLNDALDELRAVIPYAHSPSVRKLSKIATLLLAKNYILMQAQALEEMRRLVAYLNQGQAISAASLPSSAAAAAAAAALHPALGAYEQAAGYPFSAGLPPAASCPEKCALFNSVSSSLCKQCTEKP.

Disordered regions lie at residues 30 to 94 (RLEA…GGGG), 135 to 154 (RGSV…DSDG), and 188 to 242 (HLHG…EQKA). Residues 82-94 (GGGGGSAGSGGGG) are compositionally biased toward gly residues. The span at 198-225 (GGLGGGGGGGSSSGSSGGGGGSGSGSGG) shows a compositional bias: gly residues. The bHLH domain occupies 242 to 296 (ALRLNINARERRRMHDLNDALDELRAVIPYAHSPSVRKLSKIATLLLAKNYILMQ).

As to quaternary structure, interacts with PRDM8. As to expression, brain-specific, with the highest expression in the cerebellum.

The protein localises to the nucleus. Inhibits DNA binding of TCF3/E47 homodimers and TCF3 (E47)/NEUROD1 heterodimers and acts as a strong repressor of Neurod1 and Myod-responsive genes, probably by heterodimerization with class a basic helix-loop-helix factors. Despite the presence of an intact basic domain, does not bind to DNA. In the brain, may function as an area-specific transcription factor that regulates the postmitotic acquisition of area identities and elucidate the genetic hierarchy between progenitors and postmitotic neurons driving neocortical arealization. May be required for the survival of a specific population of inhibitory neurons in the superficial laminae of the spinal cord dorsal horn that may regulate pruritis. Seems to play a crucial role in the retinogenesis, in the specification of amacrine and bipolar subtypes. Forms with PRDM8 a transcriptional repressor complex controlling genes involved in neural development and neuronal differentiation. The protein is Class E basic helix-loop-helix protein 22 (BHLHE22) of Homo sapiens (Human).